A 484-amino-acid polypeptide reads, in one-letter code: tRNA sulfurtransferase (484 aa).

Residues 63–167 form the THUMP domain; sequence QGIRERLSCM…DQRLFVVHDQ (105 aa). Residues 185-186, K267, G289, and Q298 contribute to the ATP site; that span reads LM. C346 and C457 are joined by a disulfide. Residues 405–483 enclose the Rhodanese domain; the sequence is ALAGQVILDI…GHANVRVYRP (79 aa). C457 functions as the Cysteine persulfide intermediate in the catalytic mechanism.

This sequence belongs to the ThiI family.

Its subcellular location is the cytoplasm. It catalyses the reaction [ThiI sulfur-carrier protein]-S-sulfanyl-L-cysteine + a uridine in tRNA + 2 reduced [2Fe-2S]-[ferredoxin] + ATP + H(+) = [ThiI sulfur-carrier protein]-L-cysteine + a 4-thiouridine in tRNA + 2 oxidized [2Fe-2S]-[ferredoxin] + AMP + diphosphate. The catalysed reaction is [ThiS sulfur-carrier protein]-C-terminal Gly-Gly-AMP + S-sulfanyl-L-cysteinyl-[cysteine desulfurase] + AH2 = [ThiS sulfur-carrier protein]-C-terminal-Gly-aminoethanethioate + L-cysteinyl-[cysteine desulfurase] + A + AMP + 2 H(+). The protein operates within cofactor biosynthesis; thiamine diphosphate biosynthesis. In terms of biological role, catalyzes the ATP-dependent transfer of a sulfur to tRNA to produce 4-thiouridine in position 8 of tRNAs, which functions as a near-UV photosensor. Also catalyzes the transfer of sulfur to the sulfur carrier protein ThiS, forming ThiS-thiocarboxylate. This is a step in the synthesis of thiazole, in the thiamine biosynthesis pathway. The sulfur is donated as persulfide by IscS. The sequence is that of tRNA sulfurtransferase from Pseudomonas syringae pv. syringae (strain B728a).